Here is a 208-residue protein sequence, read N- to C-terminus: Large ribosomal subunit protein uL3 (208 aa).

The interval 116–148 is disordered; it reads GFQGVIKRHGQSRGPMAHGSRYHRRPGSMGPVA.

The protein belongs to the universal ribosomal protein uL3 family. In terms of assembly, part of the 50S ribosomal subunit. Forms a cluster with proteins L14 and L19.

In terms of biological role, one of the primary rRNA binding proteins, it binds directly near the 3'-end of the 23S rRNA, where it nucleates assembly of the 50S subunit. The sequence is that of Large ribosomal subunit protein uL3 from Streptococcus pyogenes serotype M5 (strain Manfredo).